The sequence spans 309 residues: MLIHVLGSGAGGGFPQWNCNCHNCNRLRKGNFKGQARTQSSIAASTNGTDWVLFNASPDILGQLQHFPAIQPGRALRDTGIRGIVLLDSQIDHTTGLLMLREHHRPLDVYCTESVHQDLTTGNPLFKVLEHYCTVNWHPLQLPQGDAPGEGFQVEGIEGLRLTPVPLRSEAPPYSPHRHNYHVGDTIGLWLEDPATQKSLFYAPGLGQIEDHVLSLMEKADCLLIDGTFWTEDEMERAGITQKRATEMGHLPQSGQGGMISVLAPLTSPWKILIHINNTNPILDEESLERAQLEAAGIEVAFDGMDIIL.

It belongs to the PqqB family.

Its pathway is cofactor biosynthesis; pyrroloquinoline quinone biosynthesis. Its function is as follows. May be involved in the transport of PQQ or its precursor to the periplasm. This is Coenzyme PQQ synthesis protein B from Nitrosococcus oceani (strain ATCC 19707 / BCRC 17464 / JCM 30415 / NCIMB 11848 / C-107).